Consider the following 769-residue polypeptide: Phosphatidylinositol 4-phosphate 5-kinase 8 (769 aa).

8 MORN repeats span residues tyrosine 16–isoleucine 38, tyrosine 39–lysine 61, tyrosine 62–valine 84, tyrosine 85–valine 107, tyrosine 108–arginine 130, phenylalanine 131–leucine 153, phenylalanine 154–phenylalanine 176, and tyrosine 177–lysine 198. Positions proline 266 to glutamate 289 are disordered. A compositionally biased stretch (polar residues) spans serine 276–serine 288. The 422-residue stretch at tryptophan 344–phenylalanine 765 folds into the PIPK domain. Residues tyrosine 725–serine 746 are activation loop.

It carries out the reaction a 1,2-diacyl-sn-glycero-3-phospho-(1D-myo-inositol 4-phosphate) + ATP = a 1,2-diacyl-sn-glycero-3-phospho-(1D-myo-inositol-4,5-bisphosphate) + ADP + H(+). This Arabidopsis thaliana (Mouse-ear cress) protein is Phosphatidylinositol 4-phosphate 5-kinase 8 (PIP5K8).